We begin with the raw amino-acid sequence, 309 residues long: MEFKDYYAILGVKPADDLKAIKTAYRRLARKYHPDVSTESNAEEQFKLVAEAYEVLKDDERRAEYDQLREHRNDPNFGRQTQHGSAHNAEDFSDIFSSMFGEHARGQQHRQRRQGMRGQDVEMEVAIFLEETQAEQTRTIRYSLPVYNAFGMVEQEIPKTLNVKIPAGVGDGERIRLKGQGGPGTDGGASGDLYLIIRIAPHPLFDIVGHNLEIVLPVAPWEAALGAKVPVPTLKDSILLTIPAGSQTGQRLRIKGKGLVGKKETGDLYAVIKVMMPPKPDEKSAALWQQLAEAQQSFDPRKDWSKQNG.

A J domain is found at 5 to 69 (DYYAILGVKP…ERRAEYDQLR (65 aa)).

The protein localises to the cytoplasm. It localises to the nucleoid. In terms of biological role, DNA-binding protein that preferentially recognizes a curved DNA sequence. It is probably a functional analog of DnaJ; displays overlapping activities with DnaJ, but functions under different conditions, probably acting as a molecular chaperone in an adaptive response to environmental stresses other than heat shock. Lacks autonomous chaperone activity; binds native substrates and targets them for recognition by DnaK. Its activity is inhibited by the binding of CbpM. This is Curved DNA-binding protein from Serratia proteamaculans (strain 568).